A 156-amino-acid polypeptide reads, in one-letter code: Probable low-salt glycan biosynthesis epimerase Agl13 (156 aa).

Substrate contacts are provided by residues arginine 19, glutamate 24, 39–41 (MSY), arginine 51, histidine 54, and histidine 109.

Belongs to the dTDP-4-dehydrorhamnose 3,5-epimerase family.

The protein operates within protein modification; protein glycosylation. It participates in cell surface structure biogenesis; S-layer biogenesis. Its function is as follows. Epimerase involved in N-glycan biosynthetic pathway that takes place under low-salt conditions (1.75 M instead of 3.4 M). Participates in the formation of the tetrasaccharide present at 'Asn-532' of S-layer glycoprotein Csg, consisting of a sulfated hexose, 2 hexoses and rhamnose. Involved in the addition of final rhamnose (sugar 4) of the tetrasaccharide on the dolichol phosphate carrier. The chain is Probable low-salt glycan biosynthesis epimerase Agl13 (agl13) from Haloferax volcanii (strain ATCC 29605 / DSM 3757 / JCM 8879 / NBRC 14742 / NCIMB 2012 / VKM B-1768 / DS2) (Halobacterium volcanii).